Reading from the N-terminus, the 161-residue chain is Large ribosomal subunit protein bL17 (161 aa).

The span at 132-144 shows a compositional bias: basic and acidic residues; sequence ARAKRAEDNRKAL. The disordered stretch occupies residues 132-161; that stretch reads ARAKRAEDNRKALEAQQAQAEAETTGETKA. A compositionally biased stretch (low complexity) spans 145-161; the sequence is EAQQAQAEAETTGETKA.

The protein belongs to the bacterial ribosomal protein bL17 family. Part of the 50S ribosomal subunit. Contacts protein L32.

This chain is Large ribosomal subunit protein bL17, found in Koribacter versatilis (strain Ellin345).